Consider the following 238-residue polypeptide: ATP-dependent dethiobiotin synthetase BioD (238 aa).

E12 to V17 serves as a coordination point for ATP. T16 lines the Mg(2+) pocket. Residue K37 is part of the active site. T41 serves as a coordination point for substrate. ATP-binding positions include D50, E109 to G112, G170 to S171, and P200 to G202. Mg(2+) is bound by residues D50 and E109.

The protein belongs to the dethiobiotin synthetase family. As to quaternary structure, homodimer. It depends on Mg(2+) as a cofactor.

The protein resides in the cytoplasm. It carries out the reaction (7R,8S)-7,8-diammoniononanoate + CO2 + ATP = (4R,5S)-dethiobiotin + ADP + phosphate + 3 H(+). Its pathway is cofactor biosynthesis; biotin biosynthesis; biotin from 7,8-diaminononanoate: step 1/2. Its function is as follows. Catalyzes a mechanistically unusual reaction, the ATP-dependent insertion of CO2 between the N7 and N8 nitrogen atoms of 7,8-diaminopelargonic acid (DAPA, also called 7,8-diammoniononanoate) to form a ureido ring. The chain is ATP-dependent dethiobiotin synthetase BioD from Parafrankia sp. (strain EAN1pec).